The sequence spans 775 residues: Acetamidase regulatory protein (775 aa).

Polar residues predominate over residues 1–15 (MSSTAHNSQPSTGNG). The disordered stretch occupies residues 1 to 20 (MSSTAHNSQPSTGNGVTKRK). The zn(2)-C6 fungal-type DNA-binding region spans 26–59 (CIHCHRRKVRCDARIVGLPCSNCRSAGKADCRIH). Residues 126 to 153 (PHSSYTNGNHLSNNRGSQPITETQTFTR) are compositionally biased toward polar residues. Disordered stretches follow at residues 126–159 (PHSS…GADR) and 630–699 (ATSE…HQNQ). Over residues 630-644 (ATSERPRRFSTHDQN) the composition is skewed to basic and acidic residues. The span at 674–689 (PRPPYEVPTPESPRMP) shows a compositional bias: pro residues.

Its subcellular location is the nucleus. Positively regulates the expression of genes involved in the catabolism of certain amides, omega amino acids, and lactams. The chain is Acetamidase regulatory protein (amdR) from Aspergillus oryzae (strain ATCC 42149 / RIB 40) (Yellow koji mold).